Reading from the N-terminus, the 78-residue chain is Large ribosomal subunit protein bL28 (78 aa).

Residues 1–20 (MSRVCQVTGKGPVTGNNISH) form a disordered region.

The protein belongs to the bacterial ribosomal protein bL28 family.

This is Large ribosomal subunit protein bL28 from Pseudomonas fluorescens (strain ATCC BAA-477 / NRRL B-23932 / Pf-5).